The following is a 409-amino-acid chain: Putative actin-fragmin kinase DDB_G0268812 (409 aa).

The segment at 1–45 (MKTFRDFKKKIKNNNNNKNNKNNNINNNNSNNNKNNKNNNNNNSN) is disordered. Positions 5-46 (RDFKKKIKNNNNNKNNKNNNINNNNSNNNKNNKNNNNNNSNN) form a coiled coil. The segment covering 13–45 (NNNNNKNNKNNNINNNNSNNNKNNKNNNNNNSN) has biased composition (low complexity).

Belongs to the protein kinase superfamily. AFK Ser/Thr protein kinase family.

The chain is Putative actin-fragmin kinase DDB_G0268812 from Dictyostelium discoideum (Social amoeba).